The following is a 252-amino-acid chain: Cysteine-rich repeat secretory protein 38 (252 aa).

Residues 1 to 27 (MSSLKRIVWFPILAIAIQILSIHTVLS) form the signal peptide. 2 consecutive Gnk2-homologous domains span residues 34-136 (FLFH…STNF) and 142-248 (FENR…IYPF).

This sequence belongs to the cysteine-rich repeat secretory protein family.

It localises to the secreted. The chain is Cysteine-rich repeat secretory protein 38 (CRRSP38) from Arabidopsis thaliana (Mouse-ear cress).